The sequence spans 383 residues: MTASSPSLSPTLELACELIRRPSVTPVDADCQALMMRRLEAAGFALEPMRIEEVDNFWARRGGDGPVLCFAGHTDVVPTGPVQAWQHQPFDALIDEQGMLCGRGAADMKGSLASMIVAVERFVADHPGHKGAIAFLITSDEEGPAHHGTKAVVERLAARGERLDWCIVGEPSSTSLVGDVVKNGRRGSLGARLTIRGVQGHVAYPHLAKNPIHLAAPALAELAAEHWDDGNAFFPPTSFQISNLNSGTGATNVIPGELSALFNFRFSTESTVEGLQKRVEAILDKHGLDWHVEWALSGLPFLTEPGELLDAVAASIKAVTGRETRPSTSGGTSDGRFIATMGTQVVELGPVNATIHQVNERVLASDLELLTEIYYQTLVRLLA.

His-73 is a Zn(2+) binding site. Asp-75 is an active-site residue. Zn(2+) is bound at residue Asp-107. Glu-141 acts as the Proton acceptor in catalysis. Zn(2+)-binding residues include Glu-142, Glu-170, and His-356.

Belongs to the peptidase M20A family. DapE subfamily. In terms of assembly, homodimer. It depends on Zn(2+) as a cofactor. The cofactor is Co(2+).

It carries out the reaction N-succinyl-(2S,6S)-2,6-diaminopimelate + H2O = (2S,6S)-2,6-diaminopimelate + succinate. It functions in the pathway amino-acid biosynthesis; L-lysine biosynthesis via DAP pathway; LL-2,6-diaminopimelate from (S)-tetrahydrodipicolinate (succinylase route): step 3/3. Functionally, catalyzes the hydrolysis of N-succinyl-L,L-diaminopimelic acid (SDAP), forming succinate and LL-2,6-diaminopimelate (DAP), an intermediate involved in the bacterial biosynthesis of lysine and meso-diaminopimelic acid, an essential component of bacterial cell walls. The protein is Succinyl-diaminopimelate desuccinylase of Pseudomonas paraeruginosa (strain DSM 24068 / PA7) (Pseudomonas aeruginosa (strain PA7)).